A 253-amino-acid chain; its full sequence is Sulfate transporter CysZ (253 aa).

4 helical membrane passes run 31–51 (FVILPLLVNILLMGGAFWWLF), 75–95 (LLWPIAVISVLLVFGYFFSTI), 151–171 (IVLLILYFIPGVGQTVAPVLW), and 222–242 (IPVLNLVIMPVAVCGATAMWV).

Belongs to the CysZ family.

Its subcellular location is the cell inner membrane. Functionally, high affinity, high specificity proton-dependent sulfate transporter, which mediates sulfate uptake. Provides the sulfur source for the cysteine synthesis pathway. This chain is Sulfate transporter CysZ, found in Citrobacter koseri (strain ATCC BAA-895 / CDC 4225-83 / SGSC4696).